Consider the following 341-residue polypeptide: MITVLRIGHRPFRDKRITTHVALVARAFGASSIYIDTRDDELENTVKKVVDNFGGSFEVKTGIEWKSFMKKFHGTKVNLTMYGEPIEKRIDEIKSGDDILVLVGAEKVPIDAYLIADYNISVTNQPHSEVAALAIFLDRYFDGKELEKSYEGKINVVPMNHGKLVKYIPDEDQCLMILKSENADDLIIRHVETVYKVAMRMADCIPCDRRLVAAGALLHDIGRTKTNNIDHAIAGAEILKKKNIDDRIVRIVERHTGAGITSEEAQKLGLPVKDYVPETIEEKIVAHADNLVSMDRIINLKQLMDKYENKNLHDAALRIKKLHEELSSICGRDLDDITKDL.

Residues L79 and 104–108 contribute to the S-adenosyl-L-methionine site; that span reads GAEKV. Positions 187 to 294 constitute an HD domain; it reads IIRHVETVYK…VAHADNLVSM (108 aa).

Belongs to the aTrm56 family. As to quaternary structure, homodimer.

The protein resides in the cytoplasm. It catalyses the reaction cytidine(56) in tRNA + S-adenosyl-L-methionine = 2'-O-methylcytidine(56) in tRNA + S-adenosyl-L-homocysteine + H(+). Specifically catalyzes the AdoMet-dependent 2'-O-ribose methylation of cytidine at position 56 in tRNAs. This chain is tRNA (cytidine(56)-2'-O)-methyltransferase, found in Picrophilus torridus (strain ATCC 700027 / DSM 9790 / JCM 10055 / NBRC 100828 / KAW 2/3).